Consider the following 240-residue polypeptide: ATP-dependent dethiobiotin synthetase BioD (240 aa).

Residue 12-17 (EIGKTV) coordinates ATP. Thr-16 is a binding site for Mg(2+). Lys-37 is an active-site residue. Residue Ser-41 coordinates substrate. Residues Asp-54, 115-118 (EGSG), 179-180 (NQ), and 207-209 (PYI) each bind ATP. Mg(2+)-binding residues include Asp-54 and Glu-115.

Belongs to the dethiobiotin synthetase family. Homodimer. Mg(2+) serves as cofactor.

Its subcellular location is the cytoplasm. It carries out the reaction (7R,8S)-7,8-diammoniononanoate + CO2 + ATP = (4R,5S)-dethiobiotin + ADP + phosphate + 3 H(+). It functions in the pathway cofactor biosynthesis; biotin biosynthesis; biotin from 7,8-diaminononanoate: step 1/2. Its function is as follows. Catalyzes a mechanistically unusual reaction, the ATP-dependent insertion of CO2 between the N7 and N8 nitrogen atoms of 7,8-diaminopelargonic acid (DAPA, also called 7,8-diammoniononanoate) to form a ureido ring. This is ATP-dependent dethiobiotin synthetase BioD from Clostridium acetobutylicum (strain ATCC 824 / DSM 792 / JCM 1419 / IAM 19013 / LMG 5710 / NBRC 13948 / NRRL B-527 / VKM B-1787 / 2291 / W).